The primary structure comprises 950 residues: Oxysterol-binding protein-related protein 1 (950 aa).

Positions M1–R237 are interaction with RAB7A. ANK repeat units lie at residues L47–M76, M80–V109, and L175–L204. Positions L235 to A334 constitute a PH domain. Residues N430 to E463 are a coiled coil. Positions S469 to S483 match the FFAT motif. Disordered stretches follow at residues K795–S821 and M881–D913. Residues D877–D913 are a coiled coil. The segment covering S890–R901 has biased composition (basic and acidic residues).

The protein belongs to the OSBP family. Interacts (via FFAT motif) with VAPA. Interacts (via FFAT motif) with VAPB. Interacts with the GTP-bound form of RAB7A. Interacts with OAS1B. Interacts (via FFAT motif) with MOSPD2 (via MSP domain). Detected in prostate and liver.

The protein resides in the late endosome. Its function is as follows. Binds phospholipids; exhibits strong binding to phosphatidic acid and weak binding to phosphatidylinositol 3-phosphate. Stabilizes GTP-bound RAB7A on late endosomes/lysosomes and alters functional properties of late endocytic compartments via its interaction with RAB7A. Binds 25-hydroxycholesterol and cholesterol. The chain is Oxysterol-binding protein-related protein 1 from Rattus norvegicus (Rat).